The sequence spans 203 residues: Short chain dehydrogenase/reductase dpmpH (203 aa).

Asp23, Tyr77, and Lys81 together coordinate NADP(+). The Proton acceptor role is filled by Tyr77. Lys81 (lowers pKa of active site Tyr) is an active-site residue.

It belongs to the short-chain dehydrogenases/reductases (SDR) family.

Its pathway is secondary metabolite biosynthesis; terpenoid biosynthesis. Functionally, short chain dehydrogenase/reductase; part of the gene cluster that mediates the biosynthesis of diterpenoid pyrones. The first step of the pathway is the synthesis of the alpha-pyrone moiety by the polyketide synthase dpmpA via condensation of one acetyl-CoA starter unit with 3 malonyl-CoA units and 2 methylations. The alpha-pyrone is then combined with geranylgeranyl pyrophosphate (GGPP) formed by the GGPP synthase dpmpD through the action of the prenyltransferase dpmpC to yield a linear alpha-pyrone diterpenoid. Subsequent steps in the diterpenoid pyrone biosynthetic pathway involve the decalin core formation, which is initiated by the epoxidation of the C10-C11 olefin by the FAD-dependent oxidoreductase dpmpE, and is followed by a cyclization cascade catalyzed by the terpene cyclase dpmpB. The short chain dehydrogenase/reductase dpmpG then oxidizes the 8S hydroxy group to a ketone and the short chain dehydrogenase/reductase dpmpH reduces the ketone to the 8R hydroxy group to yield higginsianin B. Higginsianin B is further methylated by the methyltransferase dpmpI to produce the intermediate named FDDP B. The cytochrome P450 monooxygenase dpmpJ then oxidizes the C-26 methyl to primary alcohol, producing the final diterpenoid pyrone with a C-26 primary alcohol on the gamma-pyrone moiety named FDDP C. This is Short chain dehydrogenase/reductase dpmpH from Macrophomina phaseolina (strain MS6) (Charcoal rot fungus).